The following is a 321-amino-acid chain: Porphobilinogen deaminase (321 aa).

C243 is subject to S-(dipyrrolylmethanemethyl)cysteine.

This sequence belongs to the HMBS family. Monomer. It depends on dipyrromethane as a cofactor.

The enzyme catalyses 4 porphobilinogen + H2O = hydroxymethylbilane + 4 NH4(+). It functions in the pathway porphyrin-containing compound metabolism; protoporphyrin-IX biosynthesis; coproporphyrinogen-III from 5-aminolevulinate: step 2/4. Tetrapolymerization of the monopyrrole PBG into the hydroxymethylbilane pre-uroporphyrinogen in several discrete steps. The protein is Porphobilinogen deaminase of Histophilus somni (strain 129Pt) (Haemophilus somnus).